A 466-amino-acid chain; its full sequence is A-type ATP synthase subunit B (466 aa).

The protein belongs to the ATPase alpha/beta chains family. Has multiple subunits with at least A(3), B(3), C, D, E, F, H, I and proteolipid K(x).

Its subcellular location is the cell membrane. In terms of biological role, component of the A-type ATP synthase that produces ATP from ADP in the presence of a proton gradient across the membrane. The B chain is a regulatory subunit. The protein is A-type ATP synthase subunit B of Sulfolobus acidocaldarius (strain ATCC 33909 / DSM 639 / JCM 8929 / NBRC 15157 / NCIMB 11770).